The chain runs to 543 residues: Heparanase (543 aa).

Residues 1-35 (MLLRSKPALPPPLMLLLLGPLGPLSPGALPRPAQA) form the signal peptide. Heparan sulfate group contacts are provided by residues 62 to 64 (DAN) and Thr97. Residues 110-157 (STFEERSYWQSQVNQDICKYGSIPPDVEEKLRLEWPYQEQLLLREHYQ) constitute a propeptide, linker peptide. Cys127 and Cys179 are joined by a disulfide. A heparan sulfate group-binding site is contributed by 158–162 (KKFKN). Residues Asn162, Asn178, Asn200, and Asn217 are each glycosylated (N-linked (GlcNAc...) asparagine). The Proton donor role is filled by Glu225. The N-linked (GlcNAc...) asparagine glycan is linked to Asn238. Residues 270–280 (QPRRKTAKMLK), His296, and Arg303 each bind heparan sulfate group. The required for heterodimerization with the heparanase 8 kDa subunit stretch occupies residues 288–417 (EVIDSVTWHH…LLFKKLVGTK (130 aa)). The active-site Nucleophile is Glu343. Heparan sulfate group contacts are provided by residues 348–350 (YGG) and 389–391 (GNY). A disulfide bond links Cys437 and Cys542. A glycan (N-linked (GlcNAc...) asparagine) is linked at Asn459. Positions 527-543 (FSYSFFVIRNAKVAACI) are required for transferring proheparanase to the Golgi apparatus, secretion and subsequent enzyme activity and for enhancement of PKB/AKT1 phosphorylation.

The protein belongs to the glycosyl hydrolase 79 family. In terms of assembly, heterodimer; heterodimer formation between the 8 kDa and the 50 kDa subunits is required for enzyme activity. Interacts with TF; the interaction, inhibited by heparin, enhances the generation of activated factor X and activates coagulation. Interacts with HRG; the interaction is enhanced at acidic pH, partially inhibits binding of HPSE to cell surface receptors and modulates its enzymatic activity. Interacts with SDC1; the interaction enhances the shedding of SDC1. Interacts with HPSE2. In terms of processing, proteolytically processed. The cleavage of the 65 kDa form leads to the generation of a linker peptide, and 8 kDa and 50 kDa products. The active form, the 8/50 kDa heterodimer, is resistant to degradation. Complete removal of the linker peptide appears to be a prerequisite to the complete activation of the enzyme. N-glycosylated. Glycosylation of the 50 kDa subunit appears to be essential for its solubility. As to expression, highly expressed in placenta and spleen and weakly expressed in lymph node, thymus, peripheral blood leukocytes, bone marrow, endothelial cells, fetal liver and tumor tissues. Also expressed in hair follicles, specifically in both Henle's and Huxley's layers of inner the root sheath (IRS) at anagen phase.

It localises to the lysosome membrane. Its subcellular location is the secreted. It is found in the nucleus. It catalyses the reaction endohydrolysis of (1-&gt;4)-beta-D-glycosidic bonds of heparan sulfate chains in heparan sulfate proteoglycan.. Inhibited by EDTA, laminarin sulfate and, to a lower extent, by heparin and sulfamin and activated by calcium and magnesium. Endoglycosidase that cleaves heparan sulfate proteoglycans (HSPGs) into heparan sulfate side chains and core proteoglycans. Participates in extracellular matrix (ECM) degradation and remodeling. Selectively cleaves the linkage between a glucuronic acid unit and an N-sulfo glucosamine unit carrying either a 3-O-sulfo or a 6-O-sulfo group. Can also cleave the linkage between a glucuronic acid unit and an N-sulfo glucosamine unit carrying a 2-O-sulfo group, but not linkages between a glucuronic acid unit and a 2-O-sulfated iduronic acid moiety. It is essentially inactive at neutral pH but becomes active under acidic conditions such as during tumor invasion and in inflammatory processes. Facilitates cell migration associated with metastasis, wound healing and inflammation. Enhances shedding of syndecans, and increases endothelial invasion and angiogenesis in myelomas. Acts as a procoagulant by increasing the generation of activation factor X in the presence of tissue factor and activation factor VII. Increases cell adhesion to the extracellular matrix (ECM), independent of its enzymatic activity. Induces AKT1/PKB phosphorylation via lipid rafts increasing cell mobility and invasion. Heparin increases this AKT1/PKB activation. Regulates osteogenesis. Enhances angiogenesis through up-regulation of SRC-mediated activation of VEGF. Implicated in hair follicle inner root sheath differentiation and hair homeostasis. In Homo sapiens (Human), this protein is Heparanase (HPSE).